The sequence spans 523 residues: Xanthotoxin 5-hydroxylase CYP82C2 (523 aa).

The chain crosses the membrane as a helical span at residues 1–21; sequence MDTSLFSLFVPILVFVFIALF. Cys-462 lines the heme pocket.

This sequence belongs to the cytochrome P450 family. It depends on heme as a cofactor.

It localises to the membrane. It carries out the reaction xanthotoxin + reduced [NADPH--hemoprotein reductase] + O2 = 5-hydroxyxanthotoxin + oxidized [NADPH--hemoprotein reductase] + H2O + 2 H(+). It catalyses the reaction indole-3-carbonyl nitrile + reduced [NADPH--hemoprotein reductase] + O2 = 4-hydroxy-indole-3-carbonyl nitrile + oxidized [NADPH--hemoprotein reductase] + H2O + H(+). In terms of biological role, involved in the biosynthetic pathway to 4-hydroxyindole-3-carbonyl nitrile (4-OH-ICN), a cyanogenic metabolite required for inducible pathogen defense. Converts indole-3-carbonyl nitrile (ICN) into 4-OH-ICN. Can hydroxylate xanthotoxin (8-methoxypsoralen) to form 5-hydroxyxanthotoxin (5-hydroxy-8-methoxypsoralen) in vivo and in vitro. The polypeptide is Xanthotoxin 5-hydroxylase CYP82C2 (Arabidopsis thaliana (Mouse-ear cress)).